The sequence spans 321 residues: Thioredoxin reductase (321 aa).

Residues 11–14 (SGPA), 40–41 (TA), glutamine 45, asparagine 54, cysteine 145, aspartate 288, and 295–297 (RQA) each bind FAD. Residues cysteine 142 and cysteine 145 are joined by a disulfide bond.

It belongs to the class-II pyridine nucleotide-disulfide oxidoreductase family. Homodimer. Requires FAD as cofactor.

It localises to the cytoplasm. It carries out the reaction [thioredoxin]-dithiol + NADP(+) = [thioredoxin]-disulfide + NADPH + H(+). The sequence is that of Thioredoxin reductase (TRR1) from Debaryomyces hansenii (strain ATCC 36239 / CBS 767 / BCRC 21394 / JCM 1990 / NBRC 0083 / IGC 2968) (Yeast).